The chain runs to 52 residues: Large ribosomal subunit protein bL32c (52 aa).

It belongs to the bacterial ribosomal protein bL32 family.

It localises to the plastid. Its subcellular location is the chloroplast. This chain is Large ribosomal subunit protein bL32c, found in Citrus sinensis (Sweet orange).